A 476-amino-acid chain; its full sequence is Ribulose bisphosphate carboxylase large chain (476 aa).

The substrate site is built by asparagine 124 and threonine 174. Lysine 176 acts as the Proton acceptor in catalysis. Lysine 178 contacts substrate. The Mg(2+) site is built by lysine 202, aspartate 204, and glutamate 205. At lysine 202 the chain carries N6-carboxylysine. Histidine 295 (proton acceptor) is an active-site residue. Residues arginine 296, histidine 328, and serine 380 each coordinate substrate.

The protein belongs to the RuBisCO large chain family. Type I subfamily. In terms of assembly, heterohexadecamer of 8 large chains and 8 small chains; disulfide-linked. The disulfide link is formed within the large subunit homodimers. The cofactor is Mg(2+). The disulfide bond which can form in the large chain dimeric partners within the hexadecamer appears to be associated with oxidative stress and protein turnover.

It localises to the carboxysome. The enzyme catalyses 2 (2R)-3-phosphoglycerate + 2 H(+) = D-ribulose 1,5-bisphosphate + CO2 + H2O. The catalysed reaction is D-ribulose 1,5-bisphosphate + O2 = 2-phosphoglycolate + (2R)-3-phosphoglycerate + 2 H(+). In terms of biological role, ruBisCO catalyzes two reactions: the carboxylation of D-ribulose 1,5-bisphosphate, the primary event in carbon dioxide fixation, as well as the oxidative fragmentation of the pentose substrate in the photorespiration process. Both reactions occur simultaneously and in competition at the same active site. The chain is Ribulose bisphosphate carboxylase large chain from Trichormus variabilis (strain ATCC 29413 / PCC 7937) (Anabaena variabilis).